The following is a 936-amino-acid chain: Lon protease homolog, mitochondrial (936 aa).

Residues 1-40 (MYATRAIARRLERHAARCKGAHVARAVRGARARTTSAPRA) constitute a mitochondrion transit peptide. Positions 65-95 (AFVSSVDGDGSTGSTGSSSSSSSSAFGDSAS) are disordered. A compositionally biased stretch (low complexity) spans 66–95 (FVSSVDGDGSTGSTGSSSSSSSSAFGDSAS). In terms of domain architecture, Lon N-terminal spans 112–352 (VLAVPLPRRP…ATLELLKKEV (241 aa)). 507-514 (GPPGVGKT) serves as a coordination point for ATP. One can recognise a Lon proteolytic domain in the interval 748 to 932 (VTPPGVVTGL…DEVYRQALDW (185 aa)). Active-site residues include Ser838 and Lys881.

It belongs to the peptidase S16 family. Homohexamer or homoheptamer. Organized in a ring with a central cavity.

It localises to the mitochondrion matrix. The enzyme catalyses Hydrolysis of proteins in presence of ATP.. Its function is as follows. ATP-dependent serine protease that mediates the selective degradation of misfolded, unassembled or oxidatively damaged polypeptides as well as certain short-lived regulatory proteins in the mitochondrial matrix. May also have a chaperone function in the assembly of inner membrane protein complexes. Participates in the regulation of mitochondrial gene expression and in the maintenance of the integrity of the mitochondrial genome. Binds to mitochondrial DNA in a site-specific manner. The protein is Lon protease homolog, mitochondrial of Ostreococcus lucimarinus (strain CCE9901).